A 658-amino-acid chain; its full sequence is Translin-associated factor X-interacting protein 1 (658 aa).

Coiled-coil stretches lie at residues 144-184 (EISL…AEEY) and 230-295 (ALKM…LMQL).

As to quaternary structure, interacts with TSNAX.

It is found in the cytoplasm. The protein resides in the perinuclear region. Functionally, possible role in spermatogenesis. This chain is Translin-associated factor X-interacting protein 1, found in Homo sapiens (Human).